The sequence spans 107 residues: Ribonuclease P protein component 4 (107 aa).

Zn(2+)-binding residues include Cys66, Cys69, Cys92, and Cys95.

Belongs to the eukaryotic/archaeal RNase P protein component 4 family. Consists of a catalytic RNA component and at least 4-5 protein subunits. Zn(2+) serves as cofactor.

The protein resides in the cytoplasm. It carries out the reaction Endonucleolytic cleavage of RNA, removing 5'-extranucleotides from tRNA precursor.. Part of ribonuclease P, a protein complex that generates mature tRNA molecules by cleaving their 5'-ends. This chain is Ribonuclease P protein component 4, found in Methanosarcina barkeri (strain Fusaro / DSM 804).